Here is a 159-residue protein sequence, read N- to C-terminus: Ribosomal RNA large subunit methyltransferase H (159 aa).

S-adenosyl-L-methionine is bound by residues Leu76, Gly108, and Phe127 to Leu132.

The protein belongs to the RNA methyltransferase RlmH family. In terms of assembly, homodimer.

It is found in the cytoplasm. It carries out the reaction pseudouridine(1915) in 23S rRNA + S-adenosyl-L-methionine = N(3)-methylpseudouridine(1915) in 23S rRNA + S-adenosyl-L-homocysteine + H(+). In terms of biological role, specifically methylates the pseudouridine at position 1915 (m3Psi1915) in 23S rRNA. This is Ribosomal RNA large subunit methyltransferase H from Lysinibacillus sphaericus (strain C3-41).